Reading from the N-terminus, the 229-residue chain is MNKIMIVEDSEDIRGLLQNYLEKYGYQTVVAADFTAVLDVFLREKPDVVLLDINLPAYDGYYWCRQIRQHSTSPIIFISARSGEMDQVMAIENGGDDYIEKPFSYDIVLAKIKSQIRRAYGEYAAKQGEKVVEYAGVQLFVERFELRFQDEKSELSKKESKLLEVLLERGEKVTSRDRLMEKTWDTDIFIDDNTLNVYITRLRKKLRELNAPVSIEAVRGEGYQLRAQS.

One can recognise a Response regulatory domain in the interval 3–116; it reads KIMIVEDSED…IVLAKIKSQI (114 aa). 4-aspartylphosphate is present on Asp-52. A DNA-binding region (ompR/PhoB-type) is located at residues 129-227; sequence EKVVEYAGVQ…VRGEGYQLRA (99 aa).

In terms of processing, phosphorylated by YxdK.

Its subcellular location is the cytoplasm. In terms of biological role, probable member of the two-component regulatory system YxdK/YxdJ. Positively regulates the expression of the yxdLMyxeA operon by direct interaction with its promoter region. Could also indirectly regulate the expression of the dlt operon. The chain is Transcriptional regulatory protein YxdJ (yxdJ) from Bacillus subtilis (strain 168).